The chain runs to 159 residues: Ribosomal RNA large subunit methyltransferase H (159 aa).

Residues Leu-76, Gly-108, and 127–132 contribute to the S-adenosyl-L-methionine site; that span reads FSKMTF.

The protein belongs to the RNA methyltransferase RlmH family. As to quaternary structure, homodimer.

It is found in the cytoplasm. It carries out the reaction pseudouridine(1915) in 23S rRNA + S-adenosyl-L-methionine = N(3)-methylpseudouridine(1915) in 23S rRNA + S-adenosyl-L-homocysteine + H(+). Its function is as follows. Specifically methylates the pseudouridine at position 1915 (m3Psi1915) in 23S rRNA. The protein is Ribosomal RNA large subunit methyltransferase H of Clostridium tetani (strain Massachusetts / E88).